A 181-amino-acid chain; its full sequence is Beta-lactoglobulin-2 (181 aa).

Positions 1–18 (MKCLLLALGLSLMCGNQA) are cleaved as a signal peptide. 2 disulfides stabilise this stretch: cysteine 84/cysteine 179 and cysteine 124/cysteine 138.

This sequence belongs to the calycin superfamily. Lipocalin family. As to quaternary structure, monomer.

It localises to the secreted. Its function is as follows. Lactoglobulin is the primary component of whey, it binds retinol and is probably involved in the transport of that molecule. This is Beta-lactoglobulin-2 (LGB2) from Equus caballus (Horse).